A 623-amino-acid polypeptide reads, in one-letter code: Zinc finger protein 143 (623 aa).

7 C2H2-type zinc fingers span residues 230–254, 260–284, 290–314, 320–344, 350–374, 380–404, and 410–433; these read FRCE…ERSH, YICD…VRTH, YRCQ…TRTH, FKCP…IRTH, YYCA…MRIH, YVCT…HVVH, and YNCN…RTAH.

Belongs to the GLI C2H2-type zinc-finger protein family.

It localises to the nucleus. Its function is as follows. Transcriptional activator. Activates the gene for selenocysteine tRNA (tRNAsec). Binds to the activator element (AE) motif of the selenocysteine tRNA gene promoter. This chain is Zinc finger protein 143 (znf143), found in Danio rerio (Zebrafish).